The sequence spans 354 residues: UDP-2,3-diacetamido-2,3-dideoxy-D-glucuronate 2-epimerase (354 aa).

The protein belongs to the UDP-N-acetylglucosamine 2-epimerase family.

The enzyme catalyses UDP-2,3-diacetamido-2,3-dideoxy-alpha-D-glucuronate = UDP-2,3-diacetamido-2,3-dideoxy-alpha-D-mannuronate. It functions in the pathway bacterial outer membrane biogenesis; LPS O-antigen biosynthesis. Its function is as follows. Plays a role in the biosynthesis of B-band O antigen for serotype O5. Catalyzes the epimerization of UDP-2,3-diacetamido-2,3-dideoxy-alpha-D-glucuronic acid (UDP-alpha-D-GlcNAc3NAcA) to UDP-2,3-diacetamido-2,3-dideoxy-alpha-D-mannuronic acid (UDP-alpha-D-ManNAc3NAcA). Exhibits high specificity towards the substrate as UDP-alpha-D-GlcNAc, UDP-alpha-D-GlcNAcA (UDP-2-acetamido-2-deoxy-alpha-D-glucuronic acid) and UDP-alpha-D-GlcNAc3NAc (UDP-2,3-diacetamido-2,3-dideoxy-alpha-D-glucose) cannot act as substrates. The sequence is that of UDP-2,3-diacetamido-2,3-dideoxy-D-glucuronate 2-epimerase from Pseudomonas aeruginosa (strain ATCC 15692 / DSM 22644 / CIP 104116 / JCM 14847 / LMG 12228 / 1C / PRS 101 / PAO1).